A 231-amino-acid chain; its full sequence is Probable transglycosylase SceD (231 aa).

Residues 1 to 27 form the signal peptide; the sequence is MKKTLLASSLAVGLGIVAGNAGHEAHA. The segment at 93-153 is disordered; that stretch reads SAQAPATNNV…ESKASEGSSV (61 aa). Polar residues predominate over residues 96–116; the sequence is APATNNVAPSADQANQVQSQE. Residues 119–137 show a composition bias toward low complexity; it reads APQNAQTQQPQASTSNNSQ. Positions 138 to 153 are enriched in polar residues; the sequence is VTATPTESKASEGSSV.

It belongs to the transglycosylase family. SceD subfamily.

The protein resides in the secreted. Its function is as follows. Is able to cleave peptidoglycan and affects clumping and separation of bacterial cells. The sequence is that of Probable transglycosylase SceD (sceD) from Staphylococcus aureus (strain bovine RF122 / ET3-1).